Here is a 111-residue protein sequence, read N- to C-terminus: Probable 4-amino-4-deoxy-L-arabinose-phosphoundecaprenol flippase subunit ArnE (111 aa).

Helical transmembrane passes span 38-58 (LWLG…LLVL), 61-81 (LPVG…TLAA), and 91-111 (PRHW…GSAA). Residues 40–109 (LGLALICMGA…IISGIIILGS (70 aa)) form the EamA domain.

The protein belongs to the ArnE family. In terms of assembly, heterodimer of ArnE and ArnF.

It localises to the cell inner membrane. Its pathway is bacterial outer membrane biogenesis; lipopolysaccharide biosynthesis. In terms of biological role, translocates 4-amino-4-deoxy-L-arabinose-phosphoundecaprenol (alpha-L-Ara4N-phosphoundecaprenol) from the cytoplasmic to the periplasmic side of the inner membrane. This chain is Probable 4-amino-4-deoxy-L-arabinose-phosphoundecaprenol flippase subunit ArnE, found in Salmonella newport (strain SL254).